The chain runs to 352 residues: Homoserine O-acetyltransferase (352 aa).

An AB hydrolase-1 domain is found at 37-330; sequence NAVLVCHALT…APHGHDTFLI (294 aa). Residue Ser133 is the Nucleophile of the active site. Arg206 lines the substrate pocket. Catalysis depends on residues Asp296 and His325. Asp326 contributes to the substrate binding site.

This sequence belongs to the AB hydrolase superfamily. MetX family. In terms of assembly, homodimer.

It localises to the cytoplasm. The enzyme catalyses L-homoserine + acetyl-CoA = O-acetyl-L-homoserine + CoA. The protein operates within amino-acid biosynthesis; L-methionine biosynthesis via de novo pathway; O-acetyl-L-homoserine from L-homoserine: step 1/1. Functionally, transfers an acetyl group from acetyl-CoA to L-homoserine, forming acetyl-L-homoserine. This is Homoserine O-acetyltransferase from Salinibacter ruber (strain DSM 13855 / M31).